The sequence spans 82 residues: Large ribosomal subunit protein bL27 (82 aa).

The interval 1 to 21 is disordered; that stretch reads MAHKKGASSSRNGRDSNAKRL.

This sequence belongs to the bacterial ribosomal protein bL27 family.

In Tropheryma whipplei (strain TW08/27) (Whipple's bacillus), this protein is Large ribosomal subunit protein bL27.